The chain runs to 299 residues: GTPase Era (299 aa).

The Era-type G domain occupies 4–171 (KSGFVAILGR…ISLLTDNLEE (168 aa)). The segment at 12-19 (GRPNVGKS) is G1. GTP is bound at residue 12–19 (GRPNVGKS). A G2 region spans residues 38 to 42 (QTTRN). A G3 region spans residues 59 to 62 (DTPG). Residues 59–63 (DTPGI) and 121–124 (NKID) contribute to the GTP site. The tract at residues 121 to 124 (NKID) is G4. The segment at 150–152 (ISA) is G5. Residues 202 to 280 (TQQEIPHSVA…YLETWVKVKK (79 aa)) form the KH type-2 domain.

Belongs to the TRAFAC class TrmE-Era-EngA-EngB-Septin-like GTPase superfamily. Era GTPase family. Monomer.

The protein resides in the cytoplasm. Its subcellular location is the cell membrane. Functionally, an essential GTPase that binds both GDP and GTP, with rapid nucleotide exchange. Plays a role in 16S rRNA processing and 30S ribosomal subunit biogenesis and possibly also in cell cycle regulation and energy metabolism. The polypeptide is GTPase Era (Streptococcus uberis (strain ATCC BAA-854 / 0140J)).